Consider the following 362-residue polypeptide: UDP-N-acetylglucosamine--N-acetylmuramyl-(pentapeptide) pyrophosphoryl-undecaprenol N-acetylglucosamine transferase (362 aa).

Residues 14 to 16 (TGG), Arg-170, Ser-199, and Gln-289 contribute to the UDP-N-acetyl-alpha-D-glucosamine site.

The protein belongs to the glycosyltransferase 28 family. MurG subfamily.

It is found in the cell inner membrane. It carries out the reaction di-trans,octa-cis-undecaprenyl diphospho-N-acetyl-alpha-D-muramoyl-L-alanyl-D-glutamyl-meso-2,6-diaminopimeloyl-D-alanyl-D-alanine + UDP-N-acetyl-alpha-D-glucosamine = di-trans,octa-cis-undecaprenyl diphospho-[N-acetyl-alpha-D-glucosaminyl-(1-&gt;4)]-N-acetyl-alpha-D-muramoyl-L-alanyl-D-glutamyl-meso-2,6-diaminopimeloyl-D-alanyl-D-alanine + UDP + H(+). It participates in cell wall biogenesis; peptidoglycan biosynthesis. Its function is as follows. Cell wall formation. Catalyzes the transfer of a GlcNAc subunit on undecaprenyl-pyrophosphoryl-MurNAc-pentapeptide (lipid intermediate I) to form undecaprenyl-pyrophosphoryl-MurNAc-(pentapeptide)GlcNAc (lipid intermediate II). The sequence is that of UDP-N-acetylglucosamine--N-acetylmuramyl-(pentapeptide) pyrophosphoryl-undecaprenol N-acetylglucosamine transferase from Borrelia hermsii (strain HS1 / DAH).